Reading from the N-terminus, the 314-residue chain is Solute carrier family 25 member 44 (314 aa).

3 Solcar repeats span residues Lys18 to Phe100, Ser107 to Gln210, and Pro220 to Leu302. 6 helical membrane passes run Phe20–Arg42, Thr71–Tyr90, Leu113–Val133, Gly185–Trp201, Ile222–Leu239, and Leu278–Tyr296.

This sequence belongs to the mitochondrial carrier (TC 2.A.29) family.

The protein localises to the mitochondrion membrane. The enzyme catalyses L-valine(in) = L-valine(out). It carries out the reaction L-leucine(in) = L-leucine(out). In terms of biological role, mitochondrial solute transporter which transports branched-chain amino acid (BCAA; valine, leucine and isoleucine) into mitochondria in brown adipose tissue (BAT). BAT is involved in BCAA catabolism and actively utilizes BCAA in the mitochondria for thermogenesis. The sequence is that of Solute carrier family 25 member 44 from Pongo abelii (Sumatran orangutan).